The sequence spans 435 residues: 3-phosphoshikimate 1-carboxyvinyltransferase (435 aa).

3-phosphoshikimate-binding residues include lysine 15, serine 16, and arginine 20. Lysine 15 contributes to the phosphoenolpyruvate binding site. Positions 96 and 124 each coordinate phosphoenolpyruvate. Residues serine 169, glutamine 171, serine 195, aspartate 318, and lysine 345 each coordinate 3-phosphoshikimate. Residue glutamine 171 coordinates phosphoenolpyruvate. The Proton acceptor role is filled by aspartate 318. Phosphoenolpyruvate is bound by residues arginine 349 and arginine 393.

It belongs to the EPSP synthase family. In terms of assembly, monomer.

It is found in the cytoplasm. It carries out the reaction 3-phosphoshikimate + phosphoenolpyruvate = 5-O-(1-carboxyvinyl)-3-phosphoshikimate + phosphate. It functions in the pathway metabolic intermediate biosynthesis; chorismate biosynthesis; chorismate from D-erythrose 4-phosphate and phosphoenolpyruvate: step 6/7. Catalyzes the transfer of the enolpyruvyl moiety of phosphoenolpyruvate (PEP) to the 5-hydroxyl of shikimate-3-phosphate (S3P) to produce enolpyruvyl shikimate-3-phosphate and inorganic phosphate. The polypeptide is 3-phosphoshikimate 1-carboxyvinyltransferase (Chlorobium chlorochromatii (strain CaD3)).